We begin with the raw amino-acid sequence, 219 residues long: 2-hydroxy-3-keto-5-methylthiopentenyl-1-phosphate phosphatase (219 aa).

Belongs to the HAD-like hydrolase superfamily. MtnX family.

The enzyme catalyses 2-hydroxy-5-methylsulfanyl-3-oxopent-1-enyl phosphate + H2O = 1,2-dihydroxy-5-(methylsulfanyl)pent-1-en-3-one + phosphate. It participates in amino-acid biosynthesis; L-methionine biosynthesis via salvage pathway; L-methionine from S-methyl-5-thio-alpha-D-ribose 1-phosphate: step 4/6. Functionally, dephosphorylates 2-hydroxy-3-keto-5-methylthiopentenyl-1-phosphate (HK-MTPenyl-1-P) yielding 1,2-dihydroxy-3-keto-5-methylthiopentene (DHK-MTPene). The protein is 2-hydroxy-3-keto-5-methylthiopentenyl-1-phosphate phosphatase of Bacillus cytotoxicus (strain DSM 22905 / CIP 110041 / 391-98 / NVH 391-98).